The following is a 212-amino-acid chain: Imidazole glycerol phosphate synthase subunit HisH (212 aa).

The Glutamine amidotransferase type-1 domain maps to 2-212; the sequence is LTAIIDYESG…MIGNFLTWTP (211 aa). Cys-87 acts as the Nucleophile in catalysis. Active-site residues include His-192 and Glu-194.

As to quaternary structure, heterodimer of HisH and HisF.

It localises to the cytoplasm. It carries out the reaction 5-[(5-phospho-1-deoxy-D-ribulos-1-ylimino)methylamino]-1-(5-phospho-beta-D-ribosyl)imidazole-4-carboxamide + L-glutamine = D-erythro-1-(imidazol-4-yl)glycerol 3-phosphate + 5-amino-1-(5-phospho-beta-D-ribosyl)imidazole-4-carboxamide + L-glutamate + H(+). It catalyses the reaction L-glutamine + H2O = L-glutamate + NH4(+). It participates in amino-acid biosynthesis; L-histidine biosynthesis; L-histidine from 5-phospho-alpha-D-ribose 1-diphosphate: step 5/9. IGPS catalyzes the conversion of PRFAR and glutamine to IGP, AICAR and glutamate. The HisH subunit catalyzes the hydrolysis of glutamine to glutamate and ammonia as part of the synthesis of IGP and AICAR. The resulting ammonia molecule is channeled to the active site of HisF. The protein is Imidazole glycerol phosphate synthase subunit HisH of Ruegeria pomeroyi (strain ATCC 700808 / DSM 15171 / DSS-3) (Silicibacter pomeroyi).